The sequence spans 209 residues: MSRIWDISQPLHAAVPVWPGEPAFSLHSHAVIGEGCPVNVGGMFTPLHAGTHGDAPLHYSNDGASSADCELAPYIGPCALIDVRHARGRVEIGDIDWSCVDGAERVLLRTYEQFPHEKWDSDFTAVAADVIERFGAMGVRLIGTDAASLDPEQSKTLDAHQAVKAADMRILEGLVLDDVPPGRYELIALPLRIVGADASPVRAILREIA.

Substrate is bound at residue Trp18. Residues His48, His52, and Asp54 each coordinate Zn(2+). Catalysis depends on His58, which acts as the Proton donor/acceptor. Zn(2+)-binding residues include His160 and Glu172.

It belongs to the Cyclase 1 superfamily. KynB family. Homodimer. Zn(2+) is required as a cofactor.

The enzyme catalyses N-formyl-L-kynurenine + H2O = L-kynurenine + formate + H(+). It participates in amino-acid degradation; L-tryptophan degradation via kynurenine pathway; L-kynurenine from L-tryptophan: step 2/2. Catalyzes the hydrolysis of N-formyl-L-kynurenine to L-kynurenine, the second step in the kynurenine pathway of tryptophan degradation. The sequence is that of Kynurenine formamidase from Sphingopyxis alaskensis (strain DSM 13593 / LMG 18877 / RB2256) (Sphingomonas alaskensis).